The following is an 89-amino-acid chain: Small ribosomal subunit protein uS15 (89 aa).

It belongs to the universal ribosomal protein uS15 family. In terms of assembly, part of the 30S ribosomal subunit. Forms a bridge to the 50S subunit in the 70S ribosome, contacting the 23S rRNA.

Its function is as follows. One of the primary rRNA binding proteins, it binds directly to 16S rRNA where it helps nucleate assembly of the platform of the 30S subunit by binding and bridging several RNA helices of the 16S rRNA. In terms of biological role, forms an intersubunit bridge (bridge B4) with the 23S rRNA of the 50S subunit in the ribosome. The sequence is that of Small ribosomal subunit protein uS15 from Nocardia farcinica (strain IFM 10152).